We begin with the raw amino-acid sequence, 1177 residues long: Chromosome partition protein Smc (1177 aa).

34–41 (ANGSGKSN) is a binding site for ATP. The stretch at 167 to 506 (SGIAEYDSKK…IAAEAQREVR (340 aa)) forms a coiled coil. Residues 521–627 (GIYGTLAELI…VIVNSMEEAR (107 aa)) form the SMC hinge domain. Residues 659–1012 (LAVDTTKLRE…NEIEKEKKNV (354 aa)) adopt a coiled-coil conformation.

This sequence belongs to the SMC family. In terms of assembly, homodimer.

Its subcellular location is the cytoplasm. In terms of biological role, required for chromosome condensation and partitioning. Binds single-stranded but not double-stranded DNA. The polypeptide is Chromosome partition protein Smc (Pyrococcus furiosus (strain ATCC 43587 / DSM 3638 / JCM 8422 / Vc1)).